The primary structure comprises 672 residues: tRNA 5-methylaminomethyl-2-thiouridine biosynthesis bifunctional protein MnmC (672 aa).

Residues 1–243 (MTSITHAELG…KREMIAGCME (243 aa)) form a tRNA (mnm(5)s(2)U34)-methyltransferase region. Positions 269-672 (IGGGIASAAL…LRKGKAITEL (404 aa)) are FAD-dependent cmnm(5)s(2)U34 oxidoreductase.

The protein in the N-terminal section; belongs to the methyltransferase superfamily. tRNA (mnm(5)s(2)U34)-methyltransferase family. In the C-terminal section; belongs to the DAO family. FAD is required as a cofactor.

It localises to the cytoplasm. It carries out the reaction 5-aminomethyl-2-thiouridine(34) in tRNA + S-adenosyl-L-methionine = 5-methylaminomethyl-2-thiouridine(34) in tRNA + S-adenosyl-L-homocysteine + H(+). In terms of biological role, catalyzes the last two steps in the biosynthesis of 5-methylaminomethyl-2-thiouridine (mnm(5)s(2)U) at the wobble position (U34) in tRNA. Catalyzes the FAD-dependent demodification of cmnm(5)s(2)U34 to nm(5)s(2)U34, followed by the transfer of a methyl group from S-adenosyl-L-methionine to nm(5)s(2)U34, to form mnm(5)s(2)U34. The chain is tRNA 5-methylaminomethyl-2-thiouridine biosynthesis bifunctional protein MnmC from Vibrio vulnificus (strain CMCP6).